We begin with the raw amino-acid sequence, 301 residues long: Tetrahydromethanopterin S-methyltransferase subunit E (301 aa).

The next 5 helical transmembrane spans lie at Val85 to Ile105, His130 to Tyr150, Ile151 to Ile171, Pro232 to Phe252, and Leu258 to Trp278.

It belongs to the MtrE family. The complex is composed of 8 subunits; MtrA, MtrB, MtrC, MtrD, MtrE, MtrF, MtrG and MtrH.

The protein resides in the cell membrane. It catalyses the reaction 5-methyl-5,6,7,8-tetrahydromethanopterin + coenzyme M + 2 Na(+)(in) = 5,6,7,8-tetrahydromethanopterin + methyl-coenzyme M + 2 Na(+)(out). Its function is as follows. Part of a complex that catalyzes the formation of methyl-coenzyme M and tetrahydromethanopterin from coenzyme M and methyl-tetrahydromethanopterin. This is an energy-conserving, sodium-ion translocating step. The polypeptide is Tetrahydromethanopterin S-methyltransferase subunit E (Methanococcoides burtonii (strain DSM 6242 / NBRC 107633 / OCM 468 / ACE-M)).